Consider the following 407-residue polypeptide: Na(+)-translocating NADH-quinone reductase subunit F (407 aa).

Residues 3-23 (IILGVVMFTLIVLALVLVILF) form a helical membrane-spanning segment. Residues 32-126 (GDITISINGD…DMDIELPEEI (95 aa)) enclose the 2Fe-2S ferredoxin-type domain. The [2Fe-2S] cluster site is built by Cys69, Cys75, Cys78, and Cys110. The region spanning 129 to 269 (VKKWECTVIS…SGPFGEFFAK (141 aa)) is the FAD-binding FR-type domain. Residues 272-389 (DAEMVFIGGG…PMMNAAVIGM (118 aa)) form a catalytic region.

It belongs to the NqrF family. In terms of assembly, composed of six subunits; NqrA, NqrB, NqrC, NqrD, NqrE and NqrF. [2Fe-2S] cluster serves as cofactor. Requires FAD as cofactor.

It localises to the cell inner membrane. The catalysed reaction is a ubiquinone + n Na(+)(in) + NADH + H(+) = a ubiquinol + n Na(+)(out) + NAD(+). NQR complex catalyzes the reduction of ubiquinone-1 to ubiquinol by two successive reactions, coupled with the transport of Na(+) ions from the cytoplasm to the periplasm. The first step is catalyzed by NqrF, which accepts electrons from NADH and reduces ubiquinone-1 to ubisemiquinone by a one-electron transfer pathway. This is Na(+)-translocating NADH-quinone reductase subunit F from Vibrio vulnificus (strain CMCP6).